Here is a 319-residue protein sequence, read N- to C-terminus: ATP-dependent 6-phosphofructokinase (319 aa).

An ATP-binding site is contributed by G11. 21–25 is an ADP binding site; that stretch reads RAVVR. ATP is bound by residues 72–73 and 102–105; these read RC and GDGS. Position 103 (D103) interacts with Mg(2+). 125-127 serves as a coordination point for substrate; it reads TID. Residue D127 is the Proton acceptor of the active site. R154 contacts ADP. Substrate is bound by residues R162 and 169 to 171; that span reads MGR. Residues 185–187, R211, and 213–215 each bind ADP; these read GAE and KKH. Substrate-binding positions include E222, R243, and 249 to 252; that span reads HIQR.

Belongs to the phosphofructokinase type A (PFKA) family. ATP-dependent PFK group I subfamily. Prokaryotic clade 'B1' sub-subfamily. Homotetramer. Mg(2+) is required as a cofactor.

Its subcellular location is the cytoplasm. The catalysed reaction is beta-D-fructose 6-phosphate + ATP = beta-D-fructose 1,6-bisphosphate + ADP + H(+). It functions in the pathway carbohydrate degradation; glycolysis; D-glyceraldehyde 3-phosphate and glycerone phosphate from D-glucose: step 3/4. Allosterically activated by ADP and other diphosphonucleosides, and allosterically inhibited by phosphoenolpyruvate. In terms of biological role, catalyzes the phosphorylation of D-fructose 6-phosphate to fructose 1,6-bisphosphate by ATP, the first committing step of glycolysis. This Halalkalibacterium halodurans (strain ATCC BAA-125 / DSM 18197 / FERM 7344 / JCM 9153 / C-125) (Bacillus halodurans) protein is ATP-dependent 6-phosphofructokinase.